Consider the following 69-residue polypeptide: Peptide Hact-1 (69 aa).

The N-terminal stretch at 1-21 is a signal peptide; sequence MDRKFHLCLLLVILGTIIVQG. The propeptide occupies 22–57; sequence APLENENDADPDKPQKYRYYLKRATTEKKDNDPAKP. A disulfide bridge links C59 with C68.

In terms of tissue distribution, tentacle (ecto and/or endoderm tissue), and possibly also nematoblasts.

It localises to the secreted. Its subcellular location is the nematocyst. Its function is as follows. Peptide with unknown function. Has a limited effect on human peripheral blood mononuclear cells. Does not show activity against both Gram-positive and Gram-negative bacteria nor is it active on the 26 voltage-gated ion channels tested. This Heliofungia actiniformis (Mushroom coral) protein is Peptide Hact-1.